Consider the following 85-residue polypeptide: U4-theraphotoxin-Hhn1a (85 aa).

Residues 1-22 (MKVTLIAILTCAAVLVLHTTAA) form the signal peptide. The propeptide occupies 23 to 48 (EEFEAESQLMEVGMPDTELAAVDEER). Intrachain disulfides connect Cys52/Cys66, Cys56/Cys77, and Cys71/Cys82.

Belongs to the neurotoxin 12 (Hwtx-2) family. 02 (Hwtx-2) subfamily. Monomer. Expressed by the venom gland.

The protein localises to the secreted. Neurotoxin active on both insects and mammals. This chain is U4-theraphotoxin-Hhn1a, found in Cyriopagopus hainanus (Chinese bird spider).